The following is an 858-amino-acid chain: Heat shock protein 105 kDa (858 aa).

Serine 2 carries the N-acetylserine modification. Lysine 471 carries the post-translational modification N6-acetyllysine. Disordered stretches follow at residues 500 to 584 (KVPT…PPEA) and 796 to 858 (CEPV…MDLD). Over residues 504 to 514 (EENEMSSEADM) the composition is skewed to acidic residues. Serine 509 and serine 510 each carry phosphoserine. The segment covering 532–554 (QQDNSEAGTQPQVQTDAQQTSQS) has biased composition (polar residues). Phosphoserine is present on serine 557. Threonine 561 is subject to Phosphothreonine. Basic and acidic residues-rich tracts occupy residues 563–584 (EENKIPDADKANEKKVDQPPEA) and 805–814 (PKIESPKLER). Position 809 is a phosphoserine (serine 809). Threonine 815 carries the post-translational modification Phosphothreonine. Basic and acidic residues predominate over residues 821–832 (IDKKEEDLEDKN). A compositionally biased stretch (polar residues) spans 849-858 (EKNSVNMDLD).

The protein belongs to the heat shock protein 70 family. In terms of assembly, interacts with HSPA8/HSC70. Interacts with HSPA1A (via NBD) and HSPA1B (via NBD). In terms of processing, phosphorylation on Ser-509 may be important for regulation of the HSPA8/HSC70 chaperone activity. As to expression, highly expressed in testis. Present at lower levels in most brain regions, except cerebellum. Overexpressed in cancer cells.

The protein resides in the cytoplasm. Acts as a nucleotide-exchange factor (NEF) for chaperone proteins HSPA1A and HSPA1B, promoting the release of ADP from HSPA1A/B thereby triggering client/substrate protein release. Prevents the aggregation of denatured proteins in cells under severe stress, on which the ATP levels decrease markedly. Inhibits HSPA8/HSC70 ATPase and chaperone activities. The sequence is that of Heat shock protein 105 kDa (HSPH1) from Homo sapiens (Human).